The following is a 100-amino-acid chain: NADH-quinone oxidoreductase subunit K (100 aa).

3 consecutive transmembrane segments (helical) span residues 1-21, 28-48, and 64-84; these read MIGLNHYLIVSGLLFCIGLAG, ILLLFFSTEIMLNAINIGFVA, and FIIAIAASEVAIGLGLVILWF.

This sequence belongs to the complex I subunit 4L family. As to quaternary structure, NDH-1 is composed of 14 different subunits. Subunits NuoA, H, J, K, L, M, N constitute the membrane sector of the complex.

The protein resides in the cell inner membrane. It carries out the reaction a quinone + NADH + 5 H(+)(in) = a quinol + NAD(+) + 4 H(+)(out). NDH-1 shuttles electrons from NADH, via FMN and iron-sulfur (Fe-S) centers, to quinones in the respiratory chain. The immediate electron acceptor for the enzyme in this species is believed to be ubiquinone. Couples the redox reaction to proton translocation (for every two electrons transferred, four hydrogen ions are translocated across the cytoplasmic membrane), and thus conserves the redox energy in a proton gradient. The chain is NADH-quinone oxidoreductase subunit K from Helicobacter pylori (strain Shi470).